The chain runs to 389 residues: MNNIVHKLKTLVLNEAFGGVLLIVCTLLALLVQNGSFSEHYREFLNLKVGFSVGEFELNKPFLLWINDGLISIFFFAIGLELKKEFLHGDFKNPKNIVLPFMAALGGILIPAMLFVLVNIGDAYTLKGWAIPTATDTAFALAILMMCGKHIPSSLKIFLLSLAIFDDVGAILIIAIFYTTKLSIVAFVVAGIAILAMLVLNILGITRKSFYFICSVILWISVLKSGVHATLAGIITAFFIPMQTKNGEAFLEEIYESLKFWLAFVILPLFAFANAGVNLSNIDIGAIFSGVSVGIFLGLFVGKQAGVFLFSYLAIRFKFAALPQGSNLKQLYGVCILTGIGFTMSLFIDGLAYEVSDIFNYADNLAILIASFCSGIWGFIYLKFFATRS.

Helical transmembrane passes span 12-32 (VLNE…ALLV), 62-82 (FLLW…GLEL), 97-117 (IVLP…LFVL), 128-148 (GWAI…MMCG), 157-177 (IFLL…IAIF), 184-204 (IVAF…NILG), 220-240 (ISVL…AFFI), 260-280 (FWLA…VNLS), 282-302 (IDIG…LFVG), 305-325 (AGVF…LPQG), 331-351 (LYGV…IDGL), and 365-385 (LAIL…LKFF).

This sequence belongs to the NhaA Na(+)/H(+) (TC 2.A.33) antiporter family.

Its subcellular location is the cell inner membrane. The catalysed reaction is Na(+)(in) + 2 H(+)(out) = Na(+)(out) + 2 H(+)(in). Its function is as follows. Na(+)/H(+) antiporter that extrudes sodium in exchange for external protons. This chain is Na(+)/H(+) antiporter NhaA 1, found in Campylobacter jejuni subsp. jejuni serotype O:23/36 (strain 81-176).